A 327-amino-acid chain; its full sequence is Pyruvate dehydrogenase E1 component subunit beta (327 aa).

Residue Glu63 coordinates thiamine diphosphate.

In terms of assembly, heterodimer of an alpha and a beta chain. Thiamine diphosphate is required as a cofactor.

The enzyme catalyses N(6)-[(R)-lipoyl]-L-lysyl-[protein] + pyruvate + H(+) = N(6)-[(R)-S(8)-acetyldihydrolipoyl]-L-lysyl-[protein] + CO2. The pyruvate dehydrogenase complex catalyzes the overall conversion of pyruvate to acetyl-CoA and CO(2). It contains multiple copies of three enzymatic components: pyruvate dehydrogenase (E1), dihydrolipoamide acetyltransferase (E2) and lipoamide dehydrogenase (E3). The sequence is that of Pyruvate dehydrogenase E1 component subunit beta (pdhB) from Mycoplasma pneumoniae (strain ATCC 29342 / M129 / Subtype 1) (Mycoplasmoides pneumoniae).